Here is a 312-residue protein sequence, read N- to C-terminus: Acetyl-coenzyme A carboxylase carboxyl transferase subunit beta (312 aa).

Positions 24–293 (LWIKCPDSGQ…VEHAKPAPQL (270 aa)) constitute a CoA carboxyltransferase N-terminal domain. Positions 286 to 312 (HAKPAPQLPPPAKPAETAEAPAVATSA) are disordered. Positions 299–312 (PAETAEAPAVATSA) are enriched in low complexity.

This sequence belongs to the AccD/PCCB family. Acetyl-CoA carboxylase is a heterohexamer composed of biotin carboxyl carrier protein (AccB), biotin carboxylase (AccC) and two subunits each of ACCase subunit alpha (AccA) and ACCase subunit beta (AccD).

It is found in the cytoplasm. The catalysed reaction is N(6)-carboxybiotinyl-L-lysyl-[protein] + acetyl-CoA = N(6)-biotinyl-L-lysyl-[protein] + malonyl-CoA. The protein operates within lipid metabolism; malonyl-CoA biosynthesis; malonyl-CoA from acetyl-CoA: step 1/1. In terms of biological role, component of the acetyl coenzyme A carboxylase (ACC) complex. Biotin carboxylase (BC) catalyzes the carboxylation of biotin on its carrier protein (BCCP) and then the CO(2) group is transferred by the transcarboxylase to acetyl-CoA to form malonyl-CoA. This Bradyrhizobium sp. (strain ORS 278) protein is Acetyl-coenzyme A carboxylase carboxyl transferase subunit beta.